A 130-amino-acid chain; its full sequence is Ribonuclease P protein component (130 aa).

Belongs to the RnpA family. As to quaternary structure, consists of a catalytic RNA component (M1 or rnpB) and a protein subunit.

It carries out the reaction Endonucleolytic cleavage of RNA, removing 5'-extranucleotides from tRNA precursor.. RNaseP catalyzes the removal of the 5'-leader sequence from pre-tRNA to produce the mature 5'-terminus. It can also cleave other RNA substrates such as 4.5S RNA. The protein component plays an auxiliary but essential role in vivo by binding to the 5'-leader sequence and broadening the substrate specificity of the ribozyme. This is Ribonuclease P protein component from Psychrobacter sp. (strain PRwf-1).